Here is a 257-residue protein sequence, read N- to C-terminus: Phosphonates import ATP-binding protein PhnC (257 aa).

The ABC transporter domain occupies 2-246 (IEFRNVSKVY…KFAEIYGDVA (245 aa)). 35–42 (GLSGAGKS) is an ATP binding site.

Belongs to the ABC transporter superfamily. Phosphonates importer (TC 3.A.1.9.1) family. In terms of assembly, the complex is composed of two ATP-binding proteins (PhnC), two transmembrane proteins (PhnE) and a solute-binding protein (PhnD).

The protein localises to the cell membrane. The catalysed reaction is phosphonate(out) + ATP + H2O = phosphonate(in) + ADP + phosphate + H(+). Part of the ABC transporter complex PhnCDE involved in phosphonates import. Responsible for energy coupling to the transport system. The polypeptide is Phosphonates import ATP-binding protein PhnC (Bacillus cereus (strain ATCC 10987 / NRS 248)).